Reading from the N-terminus, the 1220-residue chain is Post-transcriptional regulator MKT1L (1220 aa).

Residues Met1–Thr107 form a disordered region. Residues Pro34 to His70 are compositionally biased toward basic residues.

This sequence belongs to the XPG/RAD2 endonuclease family. Forms a complex composed of at least MKT1L, PBP1, XAC1 and LSM12.

Its subcellular location is the cytoplasm. Functionally, involved in post-transcriptional regulation of gene expression. The protein is Post-transcriptional regulator MKT1L of Trypanosoma brucei brucei (strain 927/4 GUTat10.1).